The chain runs to 241 residues: B9 domain-containing protein 1 (241 aa).

Residues 1 to 42 are disordered; that stretch reads MSASEGISLPGNEETTPPHEKHKQKAKKAKKKSRSAKESVPN. Residues 20-34 show a composition bias toward basic residues; that stretch reads EKHKQKAKKAKKKSR. The region spanning 53–197 is the C2 B9-type domain; that stretch reads FSLSIVGQIV…TSWLLRREPE (145 aa).

This sequence belongs to the B9D family. In terms of assembly, probable component of the tectonic-like complex (also named MKS complex), composed of B9d1, B9d2, Cc2d2a, Mks1 and tctn. As to expression, expressed in type I sensory neurons (at protein level). Expressed in spermatids and spermatocytes (at protein level).

The protein localises to the cytoplasm. The protein resides in the cytoskeleton. It localises to the cilium basal body. In terms of biological role, probable component of the tectonic-like complex (also named MKS complex), a complex localized at the transition zone of primary cilia. Required for ciliary structure and function. The protein is B9 domain-containing protein 1 of Drosophila melanogaster (Fruit fly).